Reading from the N-terminus, the 233-residue chain is Enolase-phosphatase E1 (233 aa).

The protein belongs to the HAD-like hydrolase superfamily. MasA/MtnC family. Monomer. Mg(2+) serves as cofactor.

It catalyses the reaction 5-methylsulfanyl-2,3-dioxopentyl phosphate + H2O = 1,2-dihydroxy-5-(methylsulfanyl)pent-1-en-3-one + phosphate. It functions in the pathway amino-acid biosynthesis; L-methionine biosynthesis via salvage pathway; L-methionine from S-methyl-5-thio-alpha-D-ribose 1-phosphate: step 3/6. It participates in amino-acid biosynthesis; L-methionine biosynthesis via salvage pathway; L-methionine from S-methyl-5-thio-alpha-D-ribose 1-phosphate: step 4/6. In terms of biological role, bifunctional enzyme that catalyzes the enolization of 2,3-diketo-5-methylthiopentyl-1-phosphate (DK-MTP-1-P) into the intermediate 2-hydroxy-3-keto-5-methylthiopentenyl-1-phosphate (HK-MTPenyl-1-P), which is then dephosphorylated to form the acireductone 1,2-dihydroxy-3-keto-5-methylthiopentene (DHK-MTPene). This chain is Enolase-phosphatase E1, found in Hahella chejuensis (strain KCTC 2396).